The sequence spans 311 residues: Pyrimidine-specific ribonucleoside hydrolase RihA (311 aa).

H240 is an active-site residue.

It belongs to the IUNH family. RihA subfamily.

Functionally, hydrolyzes with equal efficiency cytidine or uridine to ribose and cytosine or uracil, respectively. In Escherichia fergusonii (strain ATCC 35469 / DSM 13698 / CCUG 18766 / IAM 14443 / JCM 21226 / LMG 7866 / NBRC 102419 / NCTC 12128 / CDC 0568-73), this protein is Pyrimidine-specific ribonucleoside hydrolase RihA.